A 169-amino-acid polypeptide reads, in one-letter code: Myosin regulatory light chain 2, skeletal muscle isoform A (169 aa).

Serine 21 is modified (phosphoserine). 3 consecutive EF-hand domains span residues 26–61 (SQIQEYKEAFTIIDQNRDGIISKDDLRDVLASMGQL), 96–131 (DPEDVIVSAFKVLDPEGTGSIKKEFLEELLTTQCDR), and 132–167 (FTAEEMKNLWAAFPPDVAGNVDYKNICYVITHGEEK). The Ca(2+) site is built by aspartate 39, asparagine 41, aspartate 43, and aspartate 50.

As to quaternary structure, myosin is a hexamer of 2 heavy chains and 4 light chains. Interacts with nanos3; the interaction negatively regulates mylpfa phosphorylation.

Its function is as follows. Myosin regulatory subunit that plays a role to maintain muscle integrity during early development. Plays a role in muscle contraction. This is Myosin regulatory light chain 2, skeletal muscle isoform A (mylpfa) from Danio rerio (Zebrafish).